A 684-amino-acid chain; its full sequence is Pentatricopeptide repeat-containing protein At4g14850 (684 aa).

PPR repeat units lie at residues serine 5–proline 39, proline 41–arginine 71, asparagine 72–proline 106, asparagine 107–leucine 141, aspartate 142–arginine 172, asparagine 173–proline 207, asparagine 208–threonine 242, aspartate 243–serine 277, tryptophan 278–threonine 308, serine 309–arginine 343, threonine 344–lysine 374, asparagine 375–proline 409, asparagine 412–threonine 442, and glycine 448–glutamine 478. The interval valine 483–lysine 558 is type E motif; degenerate. A type E(+) motif; degenerate region spans residues asparagine 559–glutamate 589. Residues alanine 590–tryptophan 684 are type DYW motif.

Belongs to the PPR family. PCMP-H subfamily.

Acts as a regulatory factor of isoprenoid biosynthesis. Could bind RNA. The protein is Pentatricopeptide repeat-containing protein At4g14850 (LOI1) of Arabidopsis thaliana (Mouse-ear cress).